The chain runs to 312 residues: Iron/alpha-ketoglutarate-dependent dioxygenase penM (312 aa).

Residues His-134, Asp-136, and His-211 each contribute to the Fe cation site. Residues 287-312 (LGLKSEQPLPDGMEKGSMQETDIGGQ) form a disordered region.

It belongs to the PhyH family. In terms of assembly, homodimer. Fe cation serves as cofactor.

It catalyses the reaction (-)-cyclopeptine + 2-oxoglutarate + O2 = (Z)-dehydrocyclopeptine + succinate + CO2 + H2O. It carries out the reaction (Z)-dehydrocyclopeptine + 2-oxoglutarate + O2 = (-)-cyclopenine + succinate + CO2. The enzyme catalyses (-)-4'-methoxycyclopeptine + 2-oxoglutarate + O2 = (Z)-4'-methoxydehydrocyclopeptine + succinate + CO2 + H2O. The catalysed reaction is (Z)-4'-methoxydehydrocyclopeptine + 2-oxoglutarate + O2 = (-)-4'-methoxycyclopenine + succinate + CO2. Its pathway is secondary metabolite biosynthesis. The protein operates within alkaloid biosynthesis. It participates in mycotoxin biosynthesis. In terms of biological role, iron/alpha-ketoglutarate-dependent dioxygenase; part of the gene cluster that mediates the biosynthesis of penigequinolones, potent insecticidal alkaloids that contain a highly modified 10-carbon prenyl group. The first stage is catalyzed by the nonribosomal peptide synthetase penN that condenses anthranilic acid and O-methyl-L-tyrosine to produce 4'-methoxycyclopeptin. 4'-methoxycyclopeptin is then converted to 4'-methoxydehydrocyclopeptin by the ketoglutarate-dependent dioxygenase penM through dehydrogenation to form a double bond between C-alpha and C-beta of the O-methyltyrosine side chain. PenM also converts its first product methoxydehydrocyclopeptin to 4'-methoxycyclopenin. The following conversion of 4'methoxycyclopenin into 4'-methoxyviridicatin is catalyzed by the cyclopenase penL. 4'-methoxyviridicatin is the precursor of quinolone natural products, and is further converted to quinolinone B. The prenyltransferase penI then catalyzes the canonical Friedel-Crafts alkylation of quinolinone B with dimethylallyl cation to yield dimethylallyl quinolone, which is subjected to FAD-dependent dehydrogenation by the FAD-linked oxidoreductase penH to yield conjugated aryl diene. The delta(3') double bond then serves as the site of the second alkylation with DMAPP catalyzed by the prenyltransferase penG to yield a carbenium ion intermediate, which can be attacked by H(2)O to yield a styrenyl quinolone containing a C3'-hydroxyprenyl chain, or undergo cyclization to yield yaequinolones J1 and J2. The conversion of the styrenyl quinolone into the tetrahydrofuran-containing yaequinolone C is performed by the FAD-dependent monooxygenase penE and involves epoxidation of the terminal C7'-C8' olefin, followed by epoxide ring opening initiated by the C3' hydroxyl group. The predicted cysteine hydrolase penJ acts as an epoxide hydrolase that enhances the rate of the 5-exo-tet cyclization step, increasing the yield of yaequinolone C. PenF catalyzes the cationic rearrangement of the epoxide formed by penE (before ring opening to produce yaequinolone C) into yaequinolone D. Finally, the short-chain dehydrogenase/reductase (SDR)-like reductase penD, catalyzes both the dehydration of yaequinolone D and the reduction of the resulting oxonium to yield penigequinolone. The polypeptide is Iron/alpha-ketoglutarate-dependent dioxygenase penM (Penicillium thymicola).